A 124-amino-acid polypeptide reads, in one-letter code: Large ribosomal subunit protein bL19 (124 aa).

Belongs to the bacterial ribosomal protein bL19 family.

Its function is as follows. This protein is located at the 30S-50S ribosomal subunit interface and may play a role in the structure and function of the aminoacyl-tRNA binding site. The chain is Large ribosomal subunit protein bL19 from Orientia tsutsugamushi (strain Ikeda) (Rickettsia tsutsugamushi).